Consider the following 607-residue polypeptide: Rap1 GTPase-GDP dissociation stimulator 1 (607 aa).

A Nuclear export signal (NES) motif is present at residues 4 to 13; the sequence is LSDTLKKLKI. ARM repeat units follow at residues 89-131 and 170-211; these read GLIS…DQAG and DSLQ…NLAE. The prevents binding to prenylated RHOA stretch occupies residues 122-170; sequence EGRSAVDQAGGAQIVIDHLRSLCSITDPANEKLLTVFCGMLMNYSNEND. Lys-230 is modified (N6-acetyllysine). The interacts with polybasic regions in GTPases stretch occupies residues 239–255; the sequence is DKREMIFEVLAPLAEND. 3 ARM repeats span residues 347-390, 391-431, and 479-519; these read DANC…NLAI, PVIN…MLID, and SKDV…LIAA. The critical for catalytic activity stretch occupies residues 379 to 428; that stretch reads HAALSALRNLAIPVINKAKMLSAGVTEAVLKFLKSEMPPVQFKLLGTLRM.

As to quaternary structure, interacts with RABL3. Interacts with RHOT1. Interacts with unprenylated RHOA; the interaction is direct. Interacts with RAP1A. Interacts with KRAS. Interacts with RAC1. Interacts with RAP1B. Preferentially interacts with unprenylated GTPases that will become geranylgeranylated. May also interact with prenylated GTPases. In terms of assembly, interacts with prenylated RHOA; the interaction is direct and in a 1:1 stoichiometry. Interacts with RAP1A. Interacts with KRAS. Interacts with RAC1. Interacts with RAP1B. Preferentially interacts with prenylated GTPases. Post-translationally, forms covalent cross-links mediated by transglutaminase TGM2, between a glutamine and the epsilon-amino group of a lysine residue, forming homopolymers and heteropolymers.

The protein localises to the cytoplasm. The protein resides in the cytosol. It is found in the endoplasmic reticulum. Its subcellular location is the mitochondrion. It localises to the nucleus. Acts as a GEF (guanine nucleotide exchange factor) for the Rho family of small GTP-binding proteins (G proteins) that stimulates the dissociation of GDP to enable subsequent binding of GTP. Additionally, appears to chaperone the processing and/or trafficking of small GTPases containing a C-terminal polybasic region independently of GEF activity. Targets include RAP1A/RAP1B, RHOA, RHOB, RHOC, RAC1 and KRAS. Regulates mitochondrial dynamics by controlling RHOT function to promote mitochondrial fission during high calcium conditions. Able to promote the Ca(2+) release from the endoplasmic reticulum via both inositol trisphosphate (Ins3P) and ryanodine sensitive receptors leading to a enhanced mitochondrial Ca(2+) uptake. In terms of biological role, acts as a GEF (guanine nucleotide exchange factor) for unprenylated RHOA. Chaperones the entry and passage of small GTPases through the prenylation pathway. Recognizes the last amino acid in the GTPase C-terminal CAAX motif with a preference for 'Leu' over 'Met', indicating involvement in the geranylgeranylation pathway. Its function is as follows. Acts as a GEF (guanine nucleotide exchange factor) for prenylated RHOA. Acts as a GEF for RHOC. Chaperones the downstream trafficking and/or processing of small newly prenylated GTPases. Escorts RAC1 to the nucleus. In Homo sapiens (Human), this protein is Rap1 GTPase-GDP dissociation stimulator 1.